The following is a 368-amino-acid chain: Probable magnesium transporter (368 aa).

The Extracellular portion of the chain corresponds to 1 to 4; it reads MEDK. Residues 5-25 form a helical membrane-spanning segment; that stretch reads YIGLALAMSSSLAIGTSFIIT. Topologically, residues 26–50 are cytoplasmic; the sequence is KKGLMDASARTGGTDGVQASDYLQN. A helical membrane pass occupies residues 51-71; sequence PIWWGGMITMAIGEIANFAAY. The Extracellular portion of the chain corresponds to 72–76; sequence TFAPA. The helical transmembrane segment at 77-97 threads the bilayer; sequence ILVTPLGALSVIIGAVLAAIF. The Cytoplasmic segment spans residues 98–101; the sequence is LKER. Residues 102 to 122 form a helical membrane-spanning segment; the sequence is LGTLGKMGCAICLMGSVIIIL. Residues 123 to 143 are Extracellular-facing; the sequence is HAPPDKEVQTVDEILGYATQP. A helical membrane pass occupies residues 144–164; sequence GFMFYCTVVTLYSLFMIYKIV. Topologically, residues 165 to 175 are cytoplasmic; it reads PKYGNTNPMIY. The helical transmembrane segment at 176-196 threads the bilayer; that stretch reads LSICSSVGSISVMSIKAFGIA. At 197-206 the chain is on the extracellular side; sequence LKLTLGGNNQ. A helical membrane pass occupies residues 207 to 227; the sequence is FTHVSTYLFLIVVALCIVTQM. Residues 228–240 are Cytoplasmic-facing; that stretch reads NYFNKALDQFDTS. A helical transmembrane segment spans residues 241-261; sequence IVNPLYYVTFTTFTLAASFIL. Residues 262–269 are Extracellular-facing; sequence FKGFNTSS. Asparagine 266 carries N-linked (GlcNAc...) asparagine glycosylation. The helical transmembrane segment at 270–290 threads the bilayer; sequence AVDIISLLIGFLIIFSGVYLL. Residues 291 to 368 lie on the Cytoplasmic side of the membrane; the sequence is NISRSESPMV…GDEDTRNYRH (78 aa).

This sequence belongs to the NIPA family.

It localises to the cell membrane. Its subcellular location is the early endosome. The catalysed reaction is Mg(2+)(in) = Mg(2+)(out). Functionally, probably acts as a selective Mg(2+) transporter. Plays a role in cell wall integrity and in engulfment by host macrophages. The protein is Probable magnesium transporter of Candida albicans (strain SC5314 / ATCC MYA-2876) (Yeast).